We begin with the raw amino-acid sequence, 466 residues long: 3-isopropylmalate dehydratase large subunit (466 aa).

3 residues coordinate [4Fe-4S] cluster: Cys-347, Cys-407, and Cys-410.

This sequence belongs to the aconitase/IPM isomerase family. LeuC type 1 subfamily. Heterodimer of LeuC and LeuD. It depends on [4Fe-4S] cluster as a cofactor.

It carries out the reaction (2R,3S)-3-isopropylmalate = (2S)-2-isopropylmalate. Its pathway is amino-acid biosynthesis; L-leucine biosynthesis; L-leucine from 3-methyl-2-oxobutanoate: step 2/4. Catalyzes the isomerization between 2-isopropylmalate and 3-isopropylmalate, via the formation of 2-isopropylmaleate. This Escherichia coli O45:K1 (strain S88 / ExPEC) protein is 3-isopropylmalate dehydratase large subunit.